Reading from the N-terminus, the 341-residue chain is HTH-type transcriptional repressor PurR (341 aa).

An HTH lacI-type domain is found at 2-56 (ATIKDVAKHAGVSTTTVSHVINKTRFVAEDTKAAVWAAIKALNYSPSAVARSLKV). The H-T-H motif DNA-binding region spans 4 to 23 (IKDVAKHAGVSTTTVSHVIN). A DNA-binding region spans residues 48 to 56 (SAVARSLKV). The hypoxanthine site is built by Tyr-73, Arg-190, Thr-192, Phe-221, and Asp-275.

Homodimer.

It participates in purine metabolism; purine nucleotide biosynthesis [regulation]. In terms of biological role, is the main repressor of the genes involved in the de novo synthesis of purine nucleotides, regulating purB, purC, purEK, purF, purHD, purL, purMN and guaBA expression. PurR is allosterically activated to bind its cognate DNA by binding the purine corepressors, hypoxanthine or guanine, thereby effecting transcription repression. This chain is HTH-type transcriptional repressor PurR, found in Photorhabdus laumondii subsp. laumondii (strain DSM 15139 / CIP 105565 / TT01) (Photorhabdus luminescens subsp. laumondii).